The chain runs to 398 residues: Aspartic protease 3 (398 aa).

A signal peptide spans 1–17; the sequence is MSGRVFLLLALVALASA. The propeptide at 18-55 is removed in mature form; that stretch reads IQRIKLEKRTYTREQYKFGSIQEHLKAKYVPGYIPNKD. Residues 69-392 form the Peptidase A1 domain; that stretch reads YYGPVTIGTP…DHGNKRVGFA (324 aa). Residue Asp87 is part of the active site. An intrachain disulfide couples Cys100 to Cys107. Asp279 is a catalytic residue. Residues Cys313 and Cys351 are joined by a disulfide bond. Asn321 is a glycosylation site (N-linked (GlcNAc...) asparagine).

The protein belongs to the peptidase A1 family. In terms of tissue distribution, highly expressed in intestine and to a lower extent in body wall muscles, hypodermis and neurons.

The protein localises to the cytoplasm. Its subcellular location is the lysosome. It is found in the secreted. Aspartic protease. Part of the necrosis cell death pathway. Involved in neuronal cell degeneration. Involved in heat stress response. The sequence is that of Aspartic protease 3 from Caenorhabditis elegans.